We begin with the raw amino-acid sequence, 130 residues long: Small ribosomal subunit protein uS11 (130 aa).

It belongs to the universal ribosomal protein uS11 family. Part of the 30S ribosomal subunit. Interacts with proteins S7 and S18. Binds to IF-3.

In terms of biological role, located on the platform of the 30S subunit, it bridges several disparate RNA helices of the 16S rRNA. Forms part of the Shine-Dalgarno cleft in the 70S ribosome. The protein is Small ribosomal subunit protein uS11 of Nautilia profundicola (strain ATCC BAA-1463 / DSM 18972 / AmH).